We begin with the raw amino-acid sequence, 296 residues long: Protoheme IX farnesyltransferase (296 aa).

The Cytoplasmic segment spans residues 1–9 (MMFKQYLQV). A helical membrane pass occupies residues 10 to 28 (TKPGIIFGNLISVIGGFLL). The Periplasmic portion of the chain corresponds to 29-37 (ASKGSIDYP). The chain crosses the membrane as a helical span at residues 38–56 (LFIYTLVGVSLVVASGCVF). At 57–78 (NNYIDRDIDRKMERTKNRVLVK) the chain is on the cytoplasmic side. Residues 79 to 97 (GLISPAVSLVYATLLGIAG) traverse the membrane as a helical segment. Topologically, residues 98-107 (FMLLWFGANP) are periplasmic. A helical membrane pass occupies residues 108–126 (LACWLGVMGFVVYVGVYSL). The Cytoplasmic portion of the chain corresponds to 127 to 197 (YMKRHSVYGT…YQAANIPVLP (71 aa)). A helical membrane pass occupies residues 198-216 (VVKGISVAKNHITLYIIAF). The Periplasmic segment spans residues 217 to 228 (AVATLMLSLGGY). The chain crosses the membrane as a helical span at residues 229–247 (AGYKYLVVAAAVSVWWLGM). At 248-268 (ALRGYKVADDRIWARKLFGFS) the chain is on the cytoplasmic side. The chain crosses the membrane as a helical span at residues 269–287 (IIAITALSVMMSVDFMVPD). Topologically, residues 288-296 (SHTLLAAVW) are periplasmic.

Belongs to the UbiA prenyltransferase family. Protoheme IX farnesyltransferase subfamily.

It is found in the cell inner membrane. It catalyses the reaction heme b + (2E,6E)-farnesyl diphosphate + H2O = Fe(II)-heme o + diphosphate. Its pathway is porphyrin-containing compound metabolism; heme O biosynthesis; heme O from protoheme: step 1/1. Functionally, converts heme B (protoheme IX) to heme O by substitution of the vinyl group on carbon 2 of heme B porphyrin ring with a hydroxyethyl farnesyl side group. In Escherichia coli O139:H28 (strain E24377A / ETEC), this protein is Protoheme IX farnesyltransferase.